The primary structure comprises 100 residues: Putative protein BCL8 (100 aa).

As to expression, expressed in prostate and testis.

In Homo sapiens (Human), this protein is Putative protein BCL8 (NBEAP1).